An 89-amino-acid polypeptide reads, in one-letter code: uncharacterized protein (89 aa).

The chain crosses the membrane as a helical span at residues 28–50 (LYLDLGFSALLFYNSNLLFSFIL).

It is found in the membrane. This is an uncharacterized protein from Archaeoglobus fulgidus (strain ATCC 49558 / DSM 4304 / JCM 9628 / NBRC 100126 / VC-16).